We begin with the raw amino-acid sequence, 178 residues long: MTHKSVRDYIRTIVDFPHEGILFRDVTTLFADPRGFRIAIDQLLAPYAGMRFDKVAGLEARGFILGGAVAHRLSTGFVPIRKKGKLPGRTISVSYQLEYGEAVVEVHDDAIQAGEKVLLVDDLLATGGTAEAGIKLIEQLGGQVVGCAFVVDLPDLGGRKRLEAMGMEVHALCAFEGL.

This sequence belongs to the purine/pyrimidine phosphoribosyltransferase family. In terms of assembly, homodimer.

Its subcellular location is the cytoplasm. It carries out the reaction AMP + diphosphate = 5-phospho-alpha-D-ribose 1-diphosphate + adenine. It functions in the pathway purine metabolism; AMP biosynthesis via salvage pathway; AMP from adenine: step 1/1. Catalyzes a salvage reaction resulting in the formation of AMP, that is energically less costly than de novo synthesis. In Cereibacter sphaeroides (strain ATCC 17023 / DSM 158 / JCM 6121 / CCUG 31486 / LMG 2827 / NBRC 12203 / NCIMB 8253 / ATH 2.4.1.) (Rhodobacter sphaeroides), this protein is Adenine phosphoribosyltransferase.